A 223-amino-acid polypeptide reads, in one-letter code: Ribonuclease T (223 aa).

Positions 1 to 11 (MSDDHFDDEQE) are enriched in acidic residues. Residues 1–21 (MSDDHFDDEQEGSSGGPRHPM) form a disordered region. Residues 31 to 205 (VVVDVETGGF…YDTEKTAELF (175 aa)) enclose the Exonuclease domain. Residues Asp34, Glu36, His192, and Asp197 each coordinate Mg(2+). The Proton donor/acceptor role is filled by His192.

This sequence belongs to the RNase T family. As to quaternary structure, homodimer. Mg(2+) serves as cofactor.

Functionally, trims short 3' overhangs of a variety of RNA species, leaving a one or two nucleotide 3' overhang. Responsible for the end-turnover of tRNA: specifically removes the terminal AMP residue from uncharged tRNA (tRNA-C-C-A). Also appears to be involved in tRNA biosynthesis. The polypeptide is Ribonuclease T (Pseudomonas fluorescens (strain ATCC BAA-477 / NRRL B-23932 / Pf-5)).